The sequence spans 650 residues: MAGNIFPVPESWAKSAFCDNETYLKMYEQSVKDPEGFWGEHAKRIDWFQPWTKVKSGSFEGDVRFKWFENGKLNVAYNCLDRNLAKRGDQVAIIWEGDDPKVSKYITYRELHDQVCRFANVLKAQGLKKGDRATIYLPMIPELAVAMLACARIGVVHSIVFAGFSPESLAGRILDCGGKVVITADEGLRGGKPIPLKENTEEALKKCPDVQKVIVVKHTGGKVPVVPGRDVDWTEAIKAASPDCPPEVMDAEDPLFILYTSGSTGKPKGVLHTTGGYLVYTALSHQYVFDYHDGDIYWCTADIGWVTGHSYIIYGPLANGATTVMFEGIPNYPDWSRFWNVVDKHKINIFYTAPTAIRALMRQGEAPVRATSRKSLKLLGTVGEPINPEAWLWYYNNVGEQRCPIVDTWWQTETGGILITPLPGATALKPGSATRPFFGVQPAIIDPEGKMLDGPGSGYLIIKESWPGMLRTVYGDHERFKQTYFSNYPGLYFTGDGARRDEDGYYWITGRVDDVINVSGHRLGTAEVESALVAHPAVAESAVVGFPHDIKGQGIYAYVTLKANWEHSDELRQELVKWVRKEIGPIATPDYIQWAPGLPKTRSGKIMRRILRKIAANEIDNLGDTTTLAEPAVVEDLIKNRQAVASSGKA.

CoA contacts are provided by residues 189–192 (RGGK), threonine 307, and asparagine 331. ATP contacts are provided by residues 383 to 385 (GEP), 407 to 412 (DTWWQT), aspartate 496, and arginine 511. CoA is bound at residue serine 519. Arginine 522 serves as a coordination point for ATP. Mg(2+) contacts are provided by valine 533, histidine 535, and valine 538. Arginine 580 lines the CoA pocket. Lysine 605 carries the post-translational modification N6-acetyllysine.

The protein belongs to the ATP-dependent AMP-binding enzyme family. Requires Mg(2+) as cofactor. Post-translationally, acetylated. Deacetylation by the SIR2-homolog deacetylase activates the enzyme.

The enzyme catalyses acetate + ATP + CoA = acetyl-CoA + AMP + diphosphate. Functionally, catalyzes the conversion of acetate into acetyl-CoA (AcCoA), an essential intermediate at the junction of anabolic and catabolic pathways. AcsA undergoes a two-step reaction. In the first half reaction, AcsA combines acetate with ATP to form acetyl-adenylate (AcAMP) intermediate. In the second half reaction, it can then transfer the acetyl group from AcAMP to the sulfhydryl group of CoA, forming the product AcCoA. The sequence is that of Acetyl-coenzyme A synthetase from Syntrophobacter fumaroxidans (strain DSM 10017 / MPOB).